Here is an 822-residue protein sequence, read N- to C-terminus: A disintegrin and metallopeptidase domain 3 (822 aa).

A signal peptide spans 1-16 (MLPLFLVLSYLGQVIA). A Peptidase M12B domain is found at 187–384 (RILRIKIIMD…PELDCLRNTS (198 aa)). Cystine bridges form between C296-C379, C338-C363, C340-C345, C456-C476, C623-C635, C629-C641, and C643-C652. The Disintegrin domain maps to 395–484 (GSYCGNHLLE…GCAPDTKAAD (90 aa)). An EGF-like domain is found at 619 to 653 (GTRECEADDKCQGHGICNNLNNCQCESGFAPPECD). Residues 689–709 (VLLISFYILLPFLVVLAFMAV) traverse the membrane as a helical segment.

Interacts with LY6K. Interacts with TEX101. In terms of processing, initially synthesized as a 110-kDa precursor in round spermatids, and the precursor is then processed into a 42-kDa mature protein during the sperm transport into and/or once in the epididymis. In terms of tissue distribution, expressed in sperm (at protein level).

It is found in the cell membrane. Functionally, involved in fertilization by controlling sperm migration into the oviduct. Promotes the binding of sperm to the oocyte zona pellucida. This is A disintegrin and metallopeptidase domain 3 from Mus musculus (Mouse).